The primary structure comprises 385 residues: Queuine tRNA-ribosyltransferase (385 aa).

Aspartate 92 acts as the Proton acceptor in catalysis. Substrate-binding positions include 92-96 (DSGGF), aspartate 146, glutamine 188, and glycine 215. The RNA binding stretch occupies residues 246–252 (GVGHPED). Catalysis depends on aspartate 265, which acts as the Nucleophile. The segment at 270–274 (TRTGR) is RNA binding; important for wobble base 34 recognition. Zn(2+)-binding residues include cysteine 303, cysteine 305, cysteine 308, and histidine 334.

It belongs to the queuine tRNA-ribosyltransferase family. Homodimer. Within each dimer, one monomer is responsible for RNA recognition and catalysis, while the other monomer binds to the replacement base PreQ1. It depends on Zn(2+) as a cofactor.

It catalyses the reaction 7-aminomethyl-7-carbaguanine + guanosine(34) in tRNA = 7-aminomethyl-7-carbaguanosine(34) in tRNA + guanine. It functions in the pathway tRNA modification; tRNA-queuosine biosynthesis. Functionally, catalyzes the base-exchange of a guanine (G) residue with the queuine precursor 7-aminomethyl-7-deazaguanine (PreQ1) at position 34 (anticodon wobble position) in tRNAs with GU(N) anticodons (tRNA-Asp, -Asn, -His and -Tyr). Catalysis occurs through a double-displacement mechanism. The nucleophile active site attacks the C1' of nucleotide 34 to detach the guanine base from the RNA, forming a covalent enzyme-RNA intermediate. The proton acceptor active site deprotonates the incoming PreQ1, allowing a nucleophilic attack on the C1' of the ribose to form the product. After dissociation, two additional enzymatic reactions on the tRNA convert PreQ1 to queuine (Q), resulting in the hypermodified nucleoside queuosine (7-(((4,5-cis-dihydroxy-2-cyclopenten-1-yl)amino)methyl)-7-deazaguanosine). The polypeptide is Queuine tRNA-ribosyltransferase (Thermus thermophilus (strain ATCC BAA-163 / DSM 7039 / HB27)).